The chain runs to 155 residues: 6,7-dimethyl-8-ribityllumazine synthase (155 aa).

5-amino-6-(D-ribitylamino)uracil-binding positions include Phe-24, 58-60 (AFE), and 82-84 (VII). Position 87–88 (87–88 (ST)) interacts with (2S)-2-hydroxy-3-oxobutyl phosphate. The active-site Proton donor is the His-90. Phe-115 lines the 5-amino-6-(D-ribitylamino)uracil pocket. Arg-129 serves as a coordination point for (2S)-2-hydroxy-3-oxobutyl phosphate.

It belongs to the DMRL synthase family.

It catalyses the reaction (2S)-2-hydroxy-3-oxobutyl phosphate + 5-amino-6-(D-ribitylamino)uracil = 6,7-dimethyl-8-(1-D-ribityl)lumazine + phosphate + 2 H2O + H(+). Its pathway is cofactor biosynthesis; riboflavin biosynthesis; riboflavin from 2-hydroxy-3-oxobutyl phosphate and 5-amino-6-(D-ribitylamino)uracil: step 1/2. Functionally, catalyzes the formation of 6,7-dimethyl-8-ribityllumazine by condensation of 5-amino-6-(D-ribitylamino)uracil with 3,4-dihydroxy-2-butanone 4-phosphate. This is the penultimate step in the biosynthesis of riboflavin. The protein is 6,7-dimethyl-8-ribityllumazine synthase of Chlorobium limicola (strain DSM 245 / NBRC 103803 / 6330).